We begin with the raw amino-acid sequence, 379 residues long: Junctional adhesion molecule-like (379 aa).

An N-terminal signal peptide occupies residues 1 to 20 (MLCLLKLIVIPVILAPVGYP). Residues 21 to 281 (QGLPGLTVSS…QQGILNGNQL (261 aa)) are Extracellular-facing. Ig-like V-type domains follow at residues 24–135 (PGLT…KPVE) and 140–250 (PEEP…KTIV). Residues C45 and C119 are joined by a disulfide bond. N79, N89, and N125 each carry an N-linked (GlcNAc...) asparagine glycan. C158 and C236 form a disulfide bridge. A helical membrane pass occupies residues 282 to 302 (VIIVGIVCATFLLLPVLILIV). The Cytoplasmic portion of the chain corresponds to 303 to 379 (KKAKWNKSSV…SLVRSSVRSK (77 aa)). The residue at position 355 (Y355) is a Phosphotyrosine.

Belongs to the immunoglobulin superfamily. Homodimer; active form in leukocyte-endothelial cell adhesion. Interacts (homodimeric form) with CXADR. Interacts (via cytoplasmic domain) with the PI3 kinase; upon CXADR-binding. Interacts with ITGA4 and ITGB1; integrin alpha-4/beta-1 may regulate leukocyte to endothelial cells adhesion by controlling JAML homodimerization. In terms of tissue distribution, expressed by gamma-delta intraepithelial T cells (at protein level).

It is found in the cell membrane. The protein resides in the cell junction. Transmembrane protein of the plasma membrane of leukocytes that control their migration and activation through interaction with CXADR, a plasma membrane receptor found on adjacent epithelial and endothelial cells. The interaction between both receptors mediates the activation of gamma-delta T-cells, a subpopulation of T-cells residing in epithelia and involved in tissue homeostasis and repair. Upon epithelial CXADR-binding, JAML induces downstream cell signaling events in gamma-delta T-cells through PI3-kinase and MAP kinases. It results in proliferation and production of cytokines and growth factors by T-cells that in turn stimulate epithelial tissues repair. It also controls the transmigration of leukocytes within epithelial and endothelial tissues through adhesive interactions with epithelial and endothelial CXADR. The chain is Junctional adhesion molecule-like from Mus musculus (Mouse).